A 73-amino-acid chain; its full sequence is Large ribosomal subunit protein uL29 (73 aa).

The protein belongs to the universal ribosomal protein uL29 family.

This is Large ribosomal subunit protein uL29 (rpmC) from Synechocystis sp. (strain ATCC 27184 / PCC 6803 / Kazusa).